Reading from the N-terminus, the 396-residue chain is Elongation factor Tu (396 aa).

A tr-type G domain is found at 10-206; that stretch reads KPHINVGTIG…ALDSYIPEPQ (197 aa). Positions 19-26 are G1; the sequence is GHVDHGKT. Residue 19 to 26 coordinates GTP; that stretch reads GHVDHGKT. Position 26 (Thr-26) interacts with Mg(2+). Residues 60 to 64 are G2; sequence GITIN. A G3 region spans residues 81–84; the sequence is DCPG. Residues 81–85 and 136–139 each bind GTP; these read DCPGH and NKAD. A G4 region spans residues 136–139; it reads NKAD. Residues 174-176 are G5; sequence SAL.

The protein belongs to the TRAFAC class translation factor GTPase superfamily. Classic translation factor GTPase family. EF-Tu/EF-1A subfamily. Monomer.

The protein resides in the cytoplasm. The catalysed reaction is GTP + H2O = GDP + phosphate + H(+). GTP hydrolase that promotes the GTP-dependent binding of aminoacyl-tRNA to the A-site of ribosomes during protein biosynthesis. The sequence is that of Elongation factor Tu from Nitrosospira multiformis (strain ATCC 25196 / NCIMB 11849 / C 71).